We begin with the raw amino-acid sequence, 913 residues long: Protein translocase subunit SecA (913 aa).

Residues Gln87, 105 to 109, and Asp512 contribute to the ATP site; that span reads GEGKT. Positions 864 to 913 are disordered; sequence LDQPEEEPAEVEGQPDVAVASVRTEPKIGRNEPCPCGSGKKYKHCHGQVQ. Residues Cys897, Cys899, Cys908, and His909 each contribute to the Zn(2+) site. Over residues 903-913 the composition is skewed to basic residues; it reads KKYKHCHGQVQ.

This sequence belongs to the SecA family. As to quaternary structure, monomer and homodimer. Part of the essential Sec protein translocation apparatus which comprises SecA, SecYEG and auxiliary proteins SecDF-YajC and YidC. Zn(2+) serves as cofactor.

It localises to the cell inner membrane. It is found in the cytoplasm. It catalyses the reaction ATP + H2O + cellular proteinSide 1 = ADP + phosphate + cellular proteinSide 2.. Functionally, part of the Sec protein translocase complex. Interacts with the SecYEG preprotein conducting channel. Has a central role in coupling the hydrolysis of ATP to the transfer of proteins into and across the cell membrane, serving both as a receptor for the preprotein-SecB complex and as an ATP-driven molecular motor driving the stepwise translocation of polypeptide chains across the membrane. This chain is Protein translocase subunit SecA, found in Stutzerimonas stutzeri (strain A1501) (Pseudomonas stutzeri).